A 100-amino-acid chain; its full sequence is Bombyxin A-2 homolog (100 aa).

The first 18 residues, 1–18 (MRTQVLFLIVVLAVMASG), serve as a signal peptide directing secretion. Cystine bridges form between Cys-26/Cys-85, Cys-38/Cys-98, and Cys-84/Cys-89. A propeptide spans 47 to 75 (PPYISSENEGYGWKWLERQRARQLDEARG) (c peptide like).

This sequence belongs to the insulin family. In terms of assembly, heterodimer of a B chain and an A chain linked by two disulfide bonds.

The protein resides in the secreted. Functionally, brain peptide responsible for activation of prothoracic glands to produce ecdysone in insects. In Samia cynthia (Ailanthus silkmoth), this protein is Bombyxin A-2 homolog (SBXA2).